The primary structure comprises 200 residues: Molybdopterin synthase catalytic subunit (200 aa).

The segment covering 16 to 30 has biased composition (polar residues); the sequence is KLPSSHQSVEDSASE. A disordered region spans residues 16–43; sequence KLPSSHQSVEDSASEPSGYEAKDPPQDT. The residue at position 20 (Ser-20) is a Phosphoserine. Substrate is bound by residues 154 to 155, Lys-170, and 177 to 179; these read HR and KKE.

The protein belongs to the MoaE family. MOCS2B subfamily. In terms of assembly, heterotetramer; composed of 2 small (MOCS2A) and 2 large (MOCS2B) subunits.

Its subcellular location is the cytoplasm. It localises to the cytosol. The enzyme catalyses 2 [molybdopterin-synthase sulfur-carrier protein]-C-terminal-Gly-aminoethanethioate + cyclic pyranopterin phosphate + H2O = molybdopterin + 2 [molybdopterin-synthase sulfur-carrier protein]-C-terminal Gly-Gly + 2 H(+). Its pathway is cofactor biosynthesis; molybdopterin biosynthesis. Catalytic subunit of the molybdopterin synthase complex, a complex that catalyzes the conversion of precursor Z into molybdopterin. Acts by mediating the incorporation of 2 sulfur atoms from thiocarboxylated MOCS2A into precursor Z to generate a dithiolene group. This is Molybdopterin synthase catalytic subunit from Rattus norvegicus (Rat).